The following is a 374-amino-acid chain: Protein A6 homolog (374 aa).

The protein belongs to the chordopoxvirinae A6 family.

The protein localises to the virion. Plays an essential role in immature virion (IV) to mature virion (MV) transition. The protein is Protein A6 homolog of Vertebrata (FPV).